A 66-amino-acid chain; its full sequence is Sec-independent protein translocase protein TatA (66 aa).

A helical membrane pass occupies residues Met-1–Arg-21. Residues Ala-43–Glu-66 form a disordered region. Over residues Pro-50–Glu-66 the composition is skewed to basic and acidic residues.

This sequence belongs to the TatA/E family. The Tat system comprises two distinct complexes: a TatABC complex, containing multiple copies of TatA, TatB and TatC subunits, and a separate TatA complex, containing only TatA subunits. Substrates initially bind to the TatABC complex, which probably triggers association of the separate TatA complex to form the active translocon.

It is found in the cell inner membrane. Functionally, part of the twin-arginine translocation (Tat) system that transports large folded proteins containing a characteristic twin-arginine motif in their signal peptide across membranes. TatA could form the protein-conducting channel of the Tat system. This chain is Sec-independent protein translocase protein TatA, found in Pelagibacter ubique (strain HTCC1062).